The following is a 244-amino-acid chain: 3-oxoacyl-[acyl-carrier-protein] reductase FabG (244 aa).

Residues 12–15 (GASR) and T37 contribute to the NADP(+) site. Ca(2+)-binding residues include G50 and G53. Residues 59-60 (NV) and N86 each bind NADP(+). Residue S138 coordinates substrate. Residue N145 participates in Ca(2+) binding. Y151 (proton acceptor) is an active-site residue. Residues 151–155 (YAAAK) and I184 each bind NADP(+). 2 residues coordinate Ca(2+): E233 and T234.

It belongs to the short-chain dehydrogenases/reductases (SDR) family. In terms of assembly, homotetramer.

It catalyses the reaction a (3R)-hydroxyacyl-[ACP] + NADP(+) = a 3-oxoacyl-[ACP] + NADPH + H(+). The catalysed reaction is 3-oxobutanoyl-[ACP] + NADPH + H(+) = (3R)-hydroxybutanoyl-[ACP] + NADP(+). The enzyme catalyses 3-oxopentanoyl-[ACP] + NADPH + H(+) = (3R)-hydroxypentanoyl-[ACP] + NADP(+). It carries out the reaction 3-oxohexanoyl-[ACP] + NADPH + H(+) = (3R)-hydroxyhexanoyl-[ACP] + NADP(+). It catalyses the reaction 3-oxoheptanoyl-[ACP] + NADPH + H(+) = (3R)-hydroxyheptanoyl-[ACP] + NADP(+). The catalysed reaction is 3-oxooctanoyl-[ACP] + NADPH + H(+) = (3R)-hydroxyoctanoyl-[ACP] + NADP(+). The enzyme catalyses 3-oxononanoyl-[ACP] + NADPH + H(+) = (3R)-hydroxynonanoyl-[ACP] + NADP(+). It carries out the reaction 3-oxodecanoyl-[ACP] + NADPH + H(+) = (3R)-hydroxydecanoyl-[ACP] + NADP(+). It catalyses the reaction 3-oxohexadecanoyl-[ACP] + NADPH + H(+) = (3R)-hydroxyhexadecanoyl-[ACP] + NADP(+). The catalysed reaction is 3-oxo-(9Z)-hexadecenoyl-[ACP] + NADPH + H(+) = (3R)-hydroxy-(9Z)-hexadecenoyl-[ACP] + NADP(+). The enzyme catalyses 4-methyl-3-oxopentanoyl-[ACP] + NADPH + H(+) = (3R)-hydroxy-4-methylpentanoyl-[ACP] + NADP(+). It carries out the reaction 5-methyl-3-oxohexanoyl-[ACP] + NADPH + H(+) = (3R)-hydroxy-5-methylhexanoyl-[ACP] + NADP(+). It catalyses the reaction 4-methyl-3-oxohexanoyl-[ACP] + NADPH + H(+) = (3R)-hydroxy-4-methylhexanoyl-[ACP] + NADP(+). It functions in the pathway lipid metabolism; fatty acid biosynthesis. With respect to regulation, inhibited by cinnamic acid derivatives. Functionally, catalyzes the NADPH-dependent reduction of beta-ketoacyl-ACP substrates to beta-hydroxyacyl-ACP products, the first reductive step in the elongation cycle of fatty acid biosynthesis. This chain is 3-oxoacyl-[acyl-carrier-protein] reductase FabG (fabG), found in Escherichia coli (strain K12).